Reading from the N-terminus, the 430-residue chain is Probable sugar isomerase R00627 (430 aa).

Residues His-257, Asp-289, and Asp-291 each contribute to the Mn(2+) site.

It belongs to the rhamnose isomerase family. The cofactor is Mn(2+).

The polypeptide is Probable sugar isomerase R00627 (Rhizobium meliloti (strain 1021) (Ensifer meliloti)).